A 535-amino-acid polypeptide reads, in one-letter code: Arylsulfatase G (535 aa).

Positions M1 to C18 are cleaved as a signal peptide. Residues D44, D45, and C84 each coordinate Ca(2+). C84 serves as the catalytic Nucleophile. Residue C84 is modified to 3-oxoalanine (Cys). N117 carries N-linked (GlcNAc...) asparagine glycosylation. K137 serves as a coordination point for substrate. The active site involves H139. Residue S162 coordinates substrate. Residue N215 is glycosylated (N-linked (GlcNAc...) asparagine). H251 provides a ligand contact to substrate. Ca(2+) is bound by residues D302 and N303. Residues N356 and N497 are each glycosylated (N-linked (GlcNAc...) asparagine).

Belongs to the sulfatase family. Requires Ca(2+) as cofactor. In terms of processing, N-glycosylated with both high mannose and complex type sugars. The conversion to 3-oxoalanine (also known as C-formylglycine, FGly), of a serine or cysteine residue in prokaryotes and of a cysteine residue in eukaryotes, is critical for catalytic activity. Post-translationally, the 63-kDa precursor undergoes proteolytic processing in two steps, yielding two fragments in the first step (apparent molecular masses of 44 and 18 kDa). In the second step, the 44-kDa fragment is processed further to the 34- and 10-kDa chains. The 10-kDa chain is a cleavage product of the 44-kDa fragment but linked to the 18-kDa chain through a disulfide bridge.

The protein localises to the lysosome. It catalyses the reaction an aryl sulfate + H2O = a phenol + sulfate + H(+). The catalysed reaction is Hydrolysis of the 3-sulfate groups of the N-sulfo-D-glucosamine 3-O-sulfate units of heparin.. Its function is as follows. Displays arylsulfatase activity with pseudosubstrates at acidic pH, such as p-nitrocatechol sulfate. Catalyzes the hydrolysis of the 3-sulfate groups of the N-sulfo-D-glucosamine 3-O-sulfate units of heparin. The protein is Arylsulfatase G (ARSG) of Canis lupus familiaris (Dog).